A 603-amino-acid polypeptide reads, in one-letter code: F-box only protein 46 (603 aa).

The segment at Ser18–Glu54 is disordered. Phosphoserine is present on residues Ser21 and Ser67. Disordered regions lie at residues Ser113–Asp165, Glu235–Lys301, Glu332–Cys359, and Gln412–Asp442. Thr347 carries the post-translational modification Phosphothreonine. Composition is skewed to pro residues over residues Thr347–Ala356 and Glu417–Asp426. The 53-residue stretch at Arg470–Asp522 folds into the F-box domain.

As to quaternary structure, part of a SCF (SKP1-cullin-F-box) protein ligase complex SCF(FBXO46) composed of CUL1, SKP1, RBX1 and FBXO46. Post-translationally, phosphorylated by ATM in response to DNA damage, promoting ubiquitination and degradation by the SCF(FBXO31) complex. In terms of processing, ATM-phosphorylated FBXO46 is ubiquitinated and degradaded by the SCF(FBXO31) complex in response to DNA damage.

Its pathway is protein modification; protein ubiquitination. Functionally, substrate-recognition component of the SCF(FBXO46) protein ligase complex, which mediates the ubiquitination and degradation of target proteins. In absence of stress, the SCF(FBXO46) complex catalyzes ubiquitination and degradation of MTOR-phosphorylated FBXO31. This Mus musculus (Mouse) protein is F-box only protein 46 (Fbxo46).